Reading from the N-terminus, the 116-residue chain is Ribonuclease P protein component (116 aa).

Belongs to the RnpA family. Consists of a catalytic RNA component (M1 or rnpB) and a protein subunit.

The enzyme catalyses Endonucleolytic cleavage of RNA, removing 5'-extranucleotides from tRNA precursor.. Functionally, RNaseP catalyzes the removal of the 5'-leader sequence from pre-tRNA to produce the mature 5'-terminus. It can also cleave other RNA substrates such as 4.5S RNA. The protein component plays an auxiliary but essential role in vivo by binding to the 5'-leader sequence and broadening the substrate specificity of the ribozyme. The sequence is that of Ribonuclease P protein component from Caldanaerobacter subterraneus subsp. tengcongensis (strain DSM 15242 / JCM 11007 / NBRC 100824 / MB4) (Thermoanaerobacter tengcongensis).